Consider the following 22-residue polypeptide: Motilin (22 aa).

Positions 1–11 are enriched in polar residues; it reads FVPFFTQSDIQ. The interval 1–22 is disordered; sequence FVPFFTQSDIQKMQEKERNKGQ. A compositionally biased stretch (basic and acidic residues) spans 12–22; that stretch reads KMQEKERNKGQ.

It belongs to the motilin family.

Its subcellular location is the secreted. Its function is as follows. Plays an important role in the regulation of interdigestive gastrointestinal motility and indirectly causes rhythmic contraction of duodenal and colonic smooth muscle. The chain is Motilin (MLN) from Gallus gallus (Chicken).